The following is a 235-amino-acid chain: Hydroxyacylglutathione hydrolase (235 aa).

Positions 53, 55, 57, 58, 109, 127, and 165 each coordinate Zn(2+).

The protein belongs to the metallo-beta-lactamase superfamily. Glyoxalase II family. In terms of assembly, monomer. Zn(2+) is required as a cofactor.

It carries out the reaction an S-(2-hydroxyacyl)glutathione + H2O = a 2-hydroxy carboxylate + glutathione + H(+). It participates in secondary metabolite metabolism; methylglyoxal degradation; (R)-lactate from methylglyoxal: step 2/2. Functionally, thiolesterase that catalyzes the hydrolysis of S-D-lactoyl-glutathione to form glutathione and D-lactic acid. The chain is Hydroxyacylglutathione hydrolase from Actinobacillus pleuropneumoniae serotype 5b (strain L20).